The sequence spans 100 residues: Large ribosomal subunit protein bL21 (100 aa).

Belongs to the bacterial ribosomal protein bL21 family. Part of the 50S ribosomal subunit. Contacts protein L20.

In terms of biological role, this protein binds to 23S rRNA in the presence of protein L20. This Ureaplasma parvum serovar 3 (strain ATCC 27815 / 27 / NCTC 11736) protein is Large ribosomal subunit protein bL21.